The chain runs to 365 residues: UDP-N-acetylglucosamine--N-acetylmuramyl-(pentapeptide) pyrophosphoryl-undecaprenol N-acetylglucosamine transferase (365 aa).

UDP-N-acetyl-alpha-D-glucosamine is bound by residues 17-19, Asn-129, Arg-167, Ser-194, Ile-250, 269-274, and Gln-295; these read TGG and ALTVSE.

The protein belongs to the glycosyltransferase 28 family. MurG subfamily.

The protein resides in the cell inner membrane. The catalysed reaction is di-trans,octa-cis-undecaprenyl diphospho-N-acetyl-alpha-D-muramoyl-L-alanyl-D-glutamyl-meso-2,6-diaminopimeloyl-D-alanyl-D-alanine + UDP-N-acetyl-alpha-D-glucosamine = di-trans,octa-cis-undecaprenyl diphospho-[N-acetyl-alpha-D-glucosaminyl-(1-&gt;4)]-N-acetyl-alpha-D-muramoyl-L-alanyl-D-glutamyl-meso-2,6-diaminopimeloyl-D-alanyl-D-alanine + UDP + H(+). It participates in cell wall biogenesis; peptidoglycan biosynthesis. Its function is as follows. Cell wall formation. Catalyzes the transfer of a GlcNAc subunit on undecaprenyl-pyrophosphoryl-MurNAc-pentapeptide (lipid intermediate I) to form undecaprenyl-pyrophosphoryl-MurNAc-(pentapeptide)GlcNAc (lipid intermediate II). In Shewanella sediminis (strain HAW-EB3), this protein is UDP-N-acetylglucosamine--N-acetylmuramyl-(pentapeptide) pyrophosphoryl-undecaprenol N-acetylglucosamine transferase.